The following is a 118-amino-acid chain: Large ribosomal subunit protein bL20 (118 aa).

Belongs to the bacterial ribosomal protein bL20 family.

Binds directly to 23S ribosomal RNA and is necessary for the in vitro assembly process of the 50S ribosomal subunit. It is not involved in the protein synthesizing functions of that subunit. In Stutzerimonas stutzeri (strain A1501) (Pseudomonas stutzeri), this protein is Large ribosomal subunit protein bL20.